The chain runs to 207 residues: Small ribosomal subunit protein uS4c (207 aa).

The 62-residue stretch at 92–153 (MRLDNILFRL…PKIYQSIITK (62 aa)) folds into the S4 RNA-binding domain.

The protein belongs to the universal ribosomal protein uS4 family. As to quaternary structure, part of the 30S ribosomal subunit. Contacts protein S5. The interaction surface between S4 and S5 is involved in control of translational fidelity.

It localises to the plastid. It is found in the chloroplast. Functionally, one of the primary rRNA binding proteins, it binds directly to 16S rRNA where it nucleates assembly of the body of the 30S subunit. Its function is as follows. With S5 and S12 plays an important role in translational accuracy. The polypeptide is Small ribosomal subunit protein uS4c (rps4) (Equisetum bogotense (Horsetail)).